We begin with the raw amino-acid sequence, 540 residues long: CTP synthase (540 aa).

Residues 1–266 form an amidoligase domain region; it reads MAVKYIFVTG…LTPIARHLEL (266 aa). Ser-14 lines the CTP pocket. Residue Ser-14 coordinates UTP. Residues 15–20 and Asp-72 each bind ATP; that span reads SLGKGI. Mg(2+)-binding residues include Asp-72 and Glu-140. Residues 147–149, 187–192, and Lys-223 contribute to the CTP site; these read DIE and KTKPTQ. Residues 187-192 and Lys-223 contribute to the UTP site; that span reads KTKPTQ. In terms of domain architecture, Glutamine amidotransferase type-1 spans 291–540; that stretch reads TIGFVGKYLS…VKETLAHKKT (250 aa). An L-glutamine-binding site is contributed by Gly-351. Catalysis depends on Cys-378, which acts as the Nucleophile; for glutamine hydrolysis. L-glutamine is bound by residues 379-382, Glu-402, and Arg-470; that span reads LGMQ. Active-site residues include His-513 and Glu-515.

Belongs to the CTP synthase family. Homotetramer.

The enzyme catalyses UTP + L-glutamine + ATP + H2O = CTP + L-glutamate + ADP + phosphate + 2 H(+). The catalysed reaction is L-glutamine + H2O = L-glutamate + NH4(+). It catalyses the reaction UTP + NH4(+) + ATP = CTP + ADP + phosphate + 2 H(+). Its pathway is pyrimidine metabolism; CTP biosynthesis via de novo pathway; CTP from UDP: step 2/2. Allosterically activated by GTP, when glutamine is the substrate; GTP has no effect on the reaction when ammonia is the substrate. The allosteric effector GTP functions by stabilizing the protein conformation that binds the tetrahedral intermediate(s) formed during glutamine hydrolysis. Inhibited by the product CTP, via allosteric rather than competitive inhibition. In terms of biological role, catalyzes the ATP-dependent amination of UTP to CTP with either L-glutamine or ammonia as the source of nitrogen. Regulates intracellular CTP levels through interactions with the four ribonucleotide triphosphates. This chain is CTP synthase, found in Helicobacter hepaticus (strain ATCC 51449 / 3B1).